Here is a 290-residue protein sequence, read N- to C-terminus: Porphobilinogen deaminase (290 aa).

Cysteine 237 is subject to S-(dipyrrolylmethanemethyl)cysteine.

Belongs to the HMBS family. As to quaternary structure, monomer. Dipyrromethane is required as a cofactor.

It carries out the reaction 4 porphobilinogen + H2O = hydroxymethylbilane + 4 NH4(+). Its pathway is porphyrin-containing compound metabolism; protoporphyrin-IX biosynthesis; coproporphyrinogen-III from 5-aminolevulinate: step 2/4. In terms of biological role, tetrapolymerization of the monopyrrole PBG into the hydroxymethylbilane pre-uroporphyrinogen in several discrete steps. The chain is Porphobilinogen deaminase from Clostridium kluyveri (strain NBRC 12016).